A 186-amino-acid polypeptide reads, in one-letter code: UPF0301 protein Swoo_1337 (186 aa).

This sequence belongs to the UPF0301 (AlgH) family.

This chain is UPF0301 protein Swoo_1337, found in Shewanella woodyi (strain ATCC 51908 / MS32).